A 1385-amino-acid polypeptide reads, in one-letter code: L-2-aminoadipate reductase large subunit (1385 aa).

In terms of domain architecture, Carrier spans 843–920 (SSFSPLEQEI…ELAKEISRVR (78 aa)). S880 is subject to O-(pantetheine 4'-phosphoryl)serine.

It belongs to the ATP-dependent AMP-binding enzyme family. In terms of assembly, heterodimer of an alpha and a beta subunit. Pantetheine 4'-phosphate is required as a cofactor.

The enzyme catalyses (S)-2-amino-6-oxohexanoate + NADP(+) + H2O = L-2-aminoadipate + NADPH + 2 H(+). The catalysed reaction is (S)-2-amino-6-oxohexanoate + NAD(+) + H2O = L-2-aminoadipate + NADH + 2 H(+). It carries out the reaction (S)-2-amino-6-oxohexanoate + AMP + diphosphate + NADP(+) = L-2-aminoadipate + ATP + NADPH + H(+). Its pathway is amino-acid biosynthesis; L-lysine biosynthesis via AAA pathway; L-lysine from L-alpha-aminoadipate (fungal route): step 1/3. Its function is as follows. Catalyzes the activation of alpha-aminoadipate by ATP-dependent adenylation and the reduction of activated alpha-aminoadipate by NADPH. The activated alpha-aminoadipate is bound to the phosphopantheinyl group of the enzyme itself before it is reduced to (S)-2-amino-6-oxohexanoate. The chain is L-2-aminoadipate reductase large subunit (LYS2) from Eremothecium gossypii (strain ATCC 10895 / CBS 109.51 / FGSC 9923 / NRRL Y-1056) (Yeast).